A 236-amino-acid polypeptide reads, in one-letter code: LexA repressor (236 aa).

A DNA-binding region (H-T-H motif) is located at residues 26–46 (FDEMKEALDLASKSGIHRLIT). Residues 84–107 (SPSVIEGGQGRSSPAPRPAANNDD) form a disordered region. Active-site for autocatalytic cleavage activity residues include Ser157 and Lys195.

The protein belongs to the peptidase S24 family. In terms of assembly, homodimer.

It catalyses the reaction Hydrolysis of Ala-|-Gly bond in repressor LexA.. Represses a number of genes involved in the response to DNA damage (SOS response), including recA and lexA. In the presence of single-stranded DNA, RecA interacts with LexA causing an autocatalytic cleavage which disrupts the DNA-binding part of LexA, leading to derepression of the SOS regulon and eventually DNA repair. In Chelativorans sp. (strain BNC1), this protein is LexA repressor.